The chain runs to 504 residues: Maturase K (504 aa).

This sequence belongs to the intron maturase 2 family. MatK subfamily.

It is found in the plastid. The protein localises to the chloroplast. Functionally, usually encoded in the trnK tRNA gene intron. Probably assists in splicing its own and other chloroplast group II introns. The sequence is that of Maturase K from Quercus petraea (Durmast oak).